A 417-amino-acid polypeptide reads, in one-letter code: Imidazolonepropionase (417 aa).

Positions 80 and 82 each coordinate Fe(3+). Zn(2+) contacts are provided by histidine 80 and histidine 82. Residues arginine 89, tyrosine 152, and histidine 187 each coordinate 4-imidazolone-5-propanoate. Position 152 (tyrosine 152) interacts with N-formimidoyl-L-glutamate. Fe(3+) is bound at residue histidine 252. Histidine 252 serves as a coordination point for Zn(2+). 4-imidazolone-5-propanoate is bound at residue glutamate 255. Residue aspartate 326 participates in Fe(3+) binding. Aspartate 326 serves as a coordination point for Zn(2+). Asparagine 328 and glycine 330 together coordinate N-formimidoyl-L-glutamate. A 4-imidazolone-5-propanoate-binding site is contributed by serine 331.

The protein belongs to the metallo-dependent hydrolases superfamily. HutI family. Requires Zn(2+) as cofactor. The cofactor is Fe(3+).

Its subcellular location is the cytoplasm. The enzyme catalyses 4-imidazolone-5-propanoate + H2O = N-formimidoyl-L-glutamate. Its pathway is amino-acid degradation; L-histidine degradation into L-glutamate; N-formimidoyl-L-glutamate from L-histidine: step 3/3. Catalyzes the hydrolytic cleavage of the carbon-nitrogen bond in imidazolone-5-propanoate to yield N-formimidoyl-L-glutamate. It is the third step in the universal histidine degradation pathway. In Bacteroides fragilis (strain YCH46), this protein is Imidazolonepropionase.